The primary structure comprises 758 residues: UPF0313 protein CV_1738 (758 aa).

In terms of domain architecture, Radical SAM core spans 377–642; that stretch reads AWEMIKYSVN…VDVVRDGYRR (266 aa). [4Fe-4S] cluster contacts are provided by Cys-391, Cys-395, and Cys-398. Residues 698 to 758 form a disordered region; the sequence is GAPMNRGKSP…KPGGKTSRSR (61 aa). Over residues 727–737 the composition is skewed to gly residues; that stretch reads RGQGGQGGRPG.

Belongs to the UPF0313 family. It depends on [4Fe-4S] cluster as a cofactor.

The chain is UPF0313 protein CV_1738 from Chromobacterium violaceum (strain ATCC 12472 / DSM 30191 / JCM 1249 / CCUG 213 / NBRC 12614 / NCIMB 9131 / NCTC 9757 / MK).